Reading from the N-terminus, the 266-residue chain is Norfluorocurarine synthase 1 (266 aa).

An AB hydrolase-1 domain is found at 11–121; the sequence is HFVLVHGAGH…VMPDAVHPPS (111 aa). Catalysis depends on residues Ser-86, Asp-216, and His-244.

It belongs to the AB hydrolase superfamily. As to quaternary structure, homodimer. Mainly expressed in roots.

The catalysed reaction is 17-dehydropreakuammicine + H2O = norfluorocurarine + methanol + CO2. Its pathway is alkaloid biosynthesis. Functionally, hydrolase involved in the biosynthesis of curare monoterpene indole alkaloids (MIAs), natural products such as strychnine, a neurotoxic compound used as a pesticide to control rodents, and its pharmacologically active derivatives, including brucine, used to regulate blood pressure. Curare alkaloids act as animal glycine receptor antagonists. Catalyzes the conversion of dehydropreakuammicine to norfluorocurarine. This Strychnos nux-vomica (Poison nut) protein is Norfluorocurarine synthase 1.